We begin with the raw amino-acid sequence, 302 residues long: Homoserine O-acetyltransferase (302 aa).

Cysteine 142 functions as the Acyl-thioester intermediate in the catalytic mechanism. Substrate is bound by residues lysine 163 and serine 192. The active-site Proton acceptor is histidine 235. Glutamate 237 is an active-site residue. Arginine 249 is a substrate binding site.

It belongs to the MetA family.

It is found in the cytoplasm. The catalysed reaction is L-homoserine + acetyl-CoA = O-acetyl-L-homoserine + CoA. The protein operates within amino-acid biosynthesis; L-methionine biosynthesis via de novo pathway; O-acetyl-L-homoserine from L-homoserine: step 1/1. In terms of biological role, transfers an acetyl group from acetyl-CoA to L-homoserine, forming acetyl-L-homoserine. The protein is Homoserine O-acetyltransferase of Geobacillus kaustophilus (strain HTA426).